Reading from the N-terminus, the 197-residue chain is Putative ankyrin repeat protein R875 (197 aa).

ANK repeat units lie at residues 78–106, 107–136, 138–166, and 168–196; these read LNKCLIGYCISGRLDIVKYLVILGADIRE, NDDCVVRTACHNGHIEVVKYLVNQGADIRA, DDDAIRLASKNGHLYVVKYLVSQGVNFRK, and NDYEINWASQNGHGSVVDFLVSKGAVLHE.

This Acanthamoeba polyphaga mimivirus (APMV) protein is Putative ankyrin repeat protein R875.